The following is a 705-amino-acid chain: MVRATPIHRYRNIGIMAHIDAGKTTTSERILFYAGVCHQMGEVHDGAAVMDWMEQEQERGITITSAATTVFWSGMDKSMPQHRFNIIDTPGHVDFTIEVERSLRVLDGAVFVLCAVGGVQPQSETVWRQANKYFVPRMAFVNKMDRTGANFDKVVEQLKARLGAYPVPMQVPIGAEDGFEGVIDLLKMKAIHWDAASQGTVFEYRDIPIELVDKASKARAFMVEAAAEATEELMDKYLNEGELKEQEILQGLRERTLKVEIIPVFCGSAFKNKGVQAMLDGVIHLLPSPADRPPVQGLDEKGNECRCKASDSEPFSALAFKIMTDPFVGSLTFFRVYSGVLNSGDQVYNSVKLKKERVGRILQMHSNQRDEIKEVRAGDIAAAVGLKDVTTGDTLCDQNHIITLERMIFPEPVISMAVEPKTKSDQEKMGMALGRLAQEDPSFRVKTDEESGQTIISGMGELHLDIIVDRMRREFNVEANVGKPQVAYRETIRKSDVKSDYKHVKQSGGKGQYGHVVIEISPMSDVDKQHPDVKGDFLFINEITGGVIPKEFISPIEKGLRETITSGPLAGFPVVGVKVKLVFGSYHDVDSSEMAFKLAASMAFKQGFAKANPVLLEPIMKVEIVSPEDYLGDIMGDVSRRRGVLQGQDDSLSGKVINAMIPLGEMFGYATSLRSMTQGRATFAMEFDHYEEAPANIADTVIKKT.

A tr-type G domain is found at 8 to 290; that stretch reads HRYRNIGIMA…GVIHLLPSPA (283 aa). GTP is bound by residues 17–24, 88–92, and 142–145; these read AHIDAGKT, DTPGH, and NKMD.

Belongs to the TRAFAC class translation factor GTPase superfamily. Classic translation factor GTPase family. EF-G/EF-2 subfamily.

It is found in the cytoplasm. Functionally, catalyzes the GTP-dependent ribosomal translocation step during translation elongation. During this step, the ribosome changes from the pre-translocational (PRE) to the post-translocational (POST) state as the newly formed A-site-bound peptidyl-tRNA and P-site-bound deacylated tRNA move to the P and E sites, respectively. Catalyzes the coordinated movement of the two tRNA molecules, the mRNA and conformational changes in the ribosome. In Xylella fastidiosa (strain 9a5c), this protein is Elongation factor G.